The chain runs to 1258 residues: Cohesin subunit SA-1 (1258 aa).

The interval Met-1 to Pro-84 is disordered. The span at Gln-10 to His-19 shows a compositional bias: polar residues. Ser-24 is modified (phosphoserine). Residues Ser-53–Ala-62 are compositionally biased toward basic and acidic residues. The 86-residue stretch at Phe-296–Met-381 folds into the SCD domain. Residues Ser-756, Ser-1062, and Ser-1065 each carry the phosphoserine modification. Disordered regions lie at residues Gly-1055–Asn-1096 and Met-1129–His-1148. The segment covering Ser-1062–Ser-1074 has biased composition (low complexity). Positions Arg-1076–Lys-1087 are enriched in basic residues. At Ser-1093 the chain carries Phosphoserine. The segment covering Glu-1137 to Phe-1146 has biased composition (basic and acidic residues). Lys-1161 participates in a covalent cross-link: Glycyl lysine isopeptide (Lys-Gly) (interchain with G-Cter in SUMO2).

This sequence belongs to the SCC3 family. In terms of assembly, cohesin complexes are composed of a heterodimer between a SMC1 protein (SMC1A or SMC1B) and SMC3, which are attached via their hinge domain, and RAD21 which link them at their heads, and one STAG protein (STAG1, STAG2 or STAG3). In cohesin complexes, STAG1 is mutually exclusive with STAG2 and STAG3. Interacts directly with RAD21 in cohesin complex. The cohesin complex interacts with the cohesin loading complex subunits NIPBL/Scc2 (via HEAT repeats) and MAU2/Scc4. NIPBL directly contacts all members of the complex, RAD21, SMC1A/B, SMC3 and STAG1. In terms of processing, phosphorylated by PLK1. The large dissociation of cohesin from chromosome arms during prophase is partly due to its phosphorylation.

The protein resides in the nucleus. It localises to the chromosome. It is found in the centromere. In terms of biological role, component of cohesin complex, a complex required for the cohesion of sister chromatids after DNA replication. The cohesin complex apparently forms a large proteinaceous ring within which sister chromatids can be trapped. At anaphase, the complex is cleaved and dissociates from chromatin, allowing sister chromatids to segregate. The cohesin complex may also play a role in spindle pole assembly during mitosis. This is Cohesin subunit SA-1 (STAG1) from Homo sapiens (Human).